The following is a 385-amino-acid chain: 1-deoxy-D-xylulose 5-phosphate reductoisomerase (385 aa).

Thr-10, Gly-11, Ser-12, Ile-13, Lys-37, and Asn-124 together coordinate NADPH. 1-deoxy-D-xylulose 5-phosphate is bound at residue Lys-125. Glu-126 contributes to the NADPH binding site. Asp-150 is a Mn(2+) binding site. 1-deoxy-D-xylulose 5-phosphate is bound by residues Ser-151, Glu-152, Ser-176, and His-199. Glu-152 provides a ligand contact to Mn(2+). Gly-205 contributes to the NADPH binding site. Residues Ser-212, Asn-217, Lys-218, and Glu-221 each coordinate 1-deoxy-D-xylulose 5-phosphate. Residue Glu-221 coordinates Mn(2+).

Belongs to the DXR family. Requires Mg(2+) as cofactor. The cofactor is Mn(2+).

It carries out the reaction 2-C-methyl-D-erythritol 4-phosphate + NADP(+) = 1-deoxy-D-xylulose 5-phosphate + NADPH + H(+). The protein operates within isoprenoid biosynthesis; isopentenyl diphosphate biosynthesis via DXP pathway; isopentenyl diphosphate from 1-deoxy-D-xylulose 5-phosphate: step 1/6. Its function is as follows. Catalyzes the NADPH-dependent rearrangement and reduction of 1-deoxy-D-xylulose-5-phosphate (DXP) to 2-C-methyl-D-erythritol 4-phosphate (MEP). This is 1-deoxy-D-xylulose 5-phosphate reductoisomerase from Clostridium botulinum (strain Kyoto / Type A2).